A 397-amino-acid chain; its full sequence is MFCCLGYEWLSGGCKTWHSAWVINTLADHHHRGTDFGGSPWLRIIIAFPRSYKVVLTLWTVYLWLSFLKTIFQSENGHDVSTDVQQRARRSNRRRQEGLRSICMHTKKRVSSFPGNKIGLKDVITLRRHVETKGRAKIRKMKVTTKINHHDKINGKRKTAKKQKLSVKECEHAEKERQVSEAEENGKLDMKEIHTYMKMFQRAQELRRRAEDYHKCKIPPSARKALCNWVRMAAAEHRHSSGLPYWPYLTAETLKNRMGHQPPPPTQQHSITDNSLSLKTPPECLLTPLPPSADDNLKTPPECLLTPLPPSAPPSADDNLKTPPLATQEAEAEKPPKPKRWRAAEMESPPEPKRRRAAEVESPPEPKRRRAAEVEPSSPEPKRRRLSKLRTGHCTQA.

The segment at 256 to 397 is disordered; sequence NRMGHQPPPP…KLRTGHCTQA (142 aa). A compositionally biased stretch (polar residues) spans 267 to 277; sequence QQHSITDNSLS. A compositionally biased stretch (low complexity) spans 278-287; it reads LKTPPECLLT. The span at 382–391 shows a compositional bias: basic residues; the sequence is KRRRLSKLRT.

This sequence belongs to the NPIP family.

The protein resides in the nucleus. In Homo sapiens (Human), this protein is Nuclear pore complex-interacting protein family member B2.